Reading from the N-terminus, the 653-residue chain is Probable syringafactin export ATP-binding/permease protein SyfD (653 aa).

The ABC transporter domain occupies 6 to 244 (LELNGVTRRF…NEKTTERLPT (239 aa)). 42-49 (GASGSGKS) serves as a coordination point for ATP. 5 helical membrane-spanning segments follow: residues 252 to 272 (LMAN…ALIS), 278 to 298 (LLTM…VAIG), 526 to 546 (LALL…IGVM), 583 to 603 (MVCL…GYVF), and 616 to 636 (LGSI…FGFV).

It belongs to the ABC transporter superfamily. Macrolide exporter (TC 3.A.1.122) family. In terms of assembly, probably part of a tripartite efflux system, which is composed of an inner membrane transporter, a periplasmic membrane fusion protein, and an outer membrane component.

Its subcellular location is the cell inner membrane. Its function is as follows. Probably involved in the export of syringafactins. This chain is Probable syringafactin export ATP-binding/permease protein SyfD, found in Pseudomonas syringae pv. syringae (strain B728a).